A 334-amino-acid chain; its full sequence is Glycerol-3-phosphate dehydrogenase [NAD(P)+] (334 aa).

NADPH-binding residues include Ser-13, Phe-14, and Lys-108. Sn-glycerol 3-phosphate-binding residues include Lys-108, Gly-137, and Thr-139. Position 141 (Ala-141) interacts with NADPH. Sn-glycerol 3-phosphate-binding residues include Lys-193, Asp-246, Ser-256, Arg-257, and Asn-258. Lys-193 acts as the Proton acceptor in catalysis. Arg-257 contributes to the NADPH binding site. NADPH contacts are provided by Val-281 and Glu-283.

Belongs to the NAD-dependent glycerol-3-phosphate dehydrogenase family.

It is found in the cytoplasm. It catalyses the reaction sn-glycerol 3-phosphate + NAD(+) = dihydroxyacetone phosphate + NADH + H(+). The enzyme catalyses sn-glycerol 3-phosphate + NADP(+) = dihydroxyacetone phosphate + NADPH + H(+). It functions in the pathway membrane lipid metabolism; glycerophospholipid metabolism. Its function is as follows. Catalyzes the reduction of the glycolytic intermediate dihydroxyacetone phosphate (DHAP) to sn-glycerol 3-phosphate (G3P), the key precursor for phospholipid synthesis. This is Glycerol-3-phosphate dehydrogenase [NAD(P)+] from Bartonella tribocorum (strain CIP 105476 / IBS 506).